The primary structure comprises 482 residues: MTKSTVLSSYKLFAFIFIFRLANSFAIETFFQADEFFQALEPAHHFVYGYGYLTWEWKQQLRSAIHPLIYVLGYKLVGDNTTLVCISPKVINALIAAIGEYNLYKFIIVYDSEKLAWITLMLSLFNPFNWYVITRSFSNNLEMVFTVLALRFWPWNKKINGRWYISLGFGFVSCIIRPTNILIWIPLGIWLLISIRITLKWVALSFLEVVLILLINTALDYYFYQKLTFPLYNFLEFNVFKNLSIFYGTAPWHFYIFQAIPLMLMLYLPLMIYGLKKNILLLTGLFYIIGFSLIQHKEFRFIYPIHPILLYFTARGYVKFKPKFVLIGILLNICIGLFFTNVHERGVIDLTKYLATQQTPSVGFITPCHSTPWQSYFHNPNLDTNSWFLACEPPLHLNKPSMEEIRHYRDQSDQFYDAPESFLQTHLGKDLPKTEQLVVFEPLEPLMNDYLGREYYECQRFYNSFFHWDSRRDGDIIVYCRN.

A helical transmembrane segment spans residues 12–32 (LFAFIFIFRLANSFAIETFFQ). A glycan (N-linked (GlcNAc...) asparagine) is linked at Asn80. 4 helical membrane passes run 114 to 134 (KLAW…YVIT), 137 to 155 (FSNN…FWPW), 175 to 195 (IIRP…LISI), and 199 to 219 (LKWV…NTAL). A glycan (N-linked (GlcNAc...) asparagine) is linked at Asn242. 3 consecutive transmembrane segments (helical) span residues 252-272 (WHFY…PLMI), 274-294 (GLKK…FSLI), and 324-344 (FVLI…NVHE).

Belongs to the glycosyltransferase 22 family. PIGB subfamily.

It is found in the endoplasmic reticulum membrane. It functions in the pathway glycolipid biosynthesis; glycosylphosphatidylinositol-anchor biosynthesis. Mannosyltransferase involved in glycosylphosphatidylinositol-anchor biosynthesis. Transfers the third mannose to Man2-GlcN-acyl-PI during GPI precursor assembly. The chain is GPI mannosyltransferase 3 (GPI10) from Candida albicans (strain SC5314 / ATCC MYA-2876) (Yeast).